The chain runs to 201 residues: HTH-type transcriptional regulator Hpr (201 aa).

Residues 13–157 (AMLFSQRIAQ…MMCIIRNIYG (145 aa)) enclose the HTH marR-type domain. The segment at residues 63–86 (ISEIAKFGVMHVSTAFNFSKKLEE) is a DNA-binding region (H-T-H motif).

Homodimer.

Negative regulator of protease production and sporulation. The sequence is that of HTH-type transcriptional regulator Hpr from Geobacillus sp. (strain WCH70).